The following is a 173-amino-acid chain: RNA pyrophosphohydrolase (173 aa).

Positions 11-164 (PYRKCVGIVV…KKHVYMKVVS (154 aa)) constitute a Nudix hydrolase domain. The Nudix box motif lies at 52 to 73 (GGIDEDEKPLDAAYRELYEETG).

This sequence belongs to the Nudix hydrolase family. RppH subfamily. It depends on a divalent metal cation as a cofactor.

Functionally, accelerates the degradation of transcripts by removing pyrophosphate from the 5'-end of triphosphorylated RNA, leading to a more labile monophosphorylated state that can stimulate subsequent ribonuclease cleavage. The chain is RNA pyrophosphohydrolase from Bartonella tribocorum (strain CIP 105476 / IBS 506).